A 220-amino-acid polypeptide reads, in one-letter code: Deoxyribose-phosphate aldolase (220 aa).

Asp-89 acts as the Proton donor/acceptor in catalysis. Lys-151 serves as the catalytic Schiff-base intermediate with acetaldehyde. The active-site Proton donor/acceptor is Lys-180.

It belongs to the DeoC/FbaB aldolase family. DeoC type 1 subfamily.

It localises to the cytoplasm. It catalyses the reaction 2-deoxy-D-ribose 5-phosphate = D-glyceraldehyde 3-phosphate + acetaldehyde. It functions in the pathway carbohydrate degradation; 2-deoxy-D-ribose 1-phosphate degradation; D-glyceraldehyde 3-phosphate and acetaldehyde from 2-deoxy-alpha-D-ribose 1-phosphate: step 2/2. Functionally, catalyzes a reversible aldol reaction between acetaldehyde and D-glyceraldehyde 3-phosphate to generate 2-deoxy-D-ribose 5-phosphate. In Streptococcus pneumoniae (strain Hungary19A-6), this protein is Deoxyribose-phosphate aldolase.